Consider the following 149-residue polypeptide: MESLYRVPFTVLECPNLKLKKPSWLHMPSAMTVYAMVVVSYFLITGGIIYDVIVEPPSVGSMTDEHGHQRPVAFLAYRVNGQYIMEGLASSFLFTMGGLGFIILDRSNAPNIPKLNRFLLLFIGFVCVLLSFFMARVFMRMKLPGYLMG.

The Cytoplasmic portion of the chain corresponds to 1-32; it reads MESLYRVPFTVLECPNLKLKKPSWLHMPSAMT. A helical transmembrane segment spans residues 33–53; sequence VYAMVVVSYFLITGGIIYDVI. Topologically, residues 54 to 83 are extracellular; the sequence is VEPPSVGSMTDEHGHQRPVAFLAYRVNGQY. The chain crosses the membrane as a helical span at residues 84 to 104; sequence IMEGLASSFLFTMGGLGFIIL. Topologically, residues 105–117 are cytoplasmic; it reads DRSNAPNIPKLNR. A helical transmembrane segment spans residues 118-138; the sequence is FLLLFIGFVCVLLSFFMARVF. At 139-149 the chain is on the extracellular side; it reads MRMKLPGYLMG.

Belongs to the OSTC family. In terms of assembly, specific component of the STT3A-containing form of the oligosaccharyltransferase (OST) complex.

It is found in the membrane. It participates in protein modification; protein glycosylation. In terms of biological role, specific component of the STT3A-containing form of the oligosaccharyl transferase (OST) complex that catalyzes the initial transfer of a defined glycan (Glc(3)Man(9)GlcNAc(2) in eukaryotes) from the lipid carrier dolichol-pyrophosphate to an asparagine residue within an Asn-X-Ser/Thr consensus motif in nascent polypeptide chains, the first step in protein N-glycosylation. N-glycosylation occurs cotranslationally and the complex associates with the Sec61 complex at the channel-forming translocon complex that mediates protein translocation across the endoplasmic reticulum (ER). All subunits are required for a maximal enzyme activity. The polypeptide is Oligosaccharyltransferase complex subunit ostc (Xenopus tropicalis (Western clawed frog)).